We begin with the raw amino-acid sequence, 65 residues long: Alpha-toxin OD1 (65 aa).

Residues 3–65 enclose the LCN-type CS-alpha/beta domain; the sequence is RDAYIADDKN…VPIRIPGKCR (63 aa). The short motif at 9–11 is the Important for toxin selectivity for individual Nav channel subtype (Nav1.6/SCN8A and Nav1.7/SCN9A), but not for toxin potency element; the sequence is DDK. 4 disulfides stabilise this stretch: C13-C64, C17-C37, C23-C47, and C27-C49. The residue at position 65 (R65) is an Arginine amide.

The protein belongs to the long (4 C-C) scorpion toxin superfamily. Sodium channel inhibitor family. Alpha subfamily. In terms of tissue distribution, expressed by the venom gland.

Its subcellular location is the secreted. Its function is as follows. Alpha toxins bind voltage-independently at site-3 of sodium channels and inhibit the inactivation of the activated channels. The toxin affect mammalian sodium channels Nav1.7/SCN9A (EC(50)=4.5 nM), Nav1.4/SCN4A (EC(50)=9.6 nM), Nav1.6/SCN8A (EC(50)=30 nM), Nav1.5/SCN5A (only at micromolar concentrations), and insect sodium channel para/tipE (EC(50)=80 nM). In vivo, intraplantar administration of this toxin elicits pain behaviors, including licking and flinching of the hind paw. This chain is Alpha-toxin OD1, found in Odontobuthus doriae (Yellow Iranian scorpion).